Consider the following 141-residue polypeptide: 3-hydroxyacyl-[acyl-carrier-protein] dehydratase FabZ (141 aa).

H47 is an active-site residue.

Belongs to the thioester dehydratase family. FabZ subfamily.

The protein resides in the cytoplasm. It catalyses the reaction a (3R)-hydroxyacyl-[ACP] = a (2E)-enoyl-[ACP] + H2O. In terms of biological role, involved in unsaturated fatty acids biosynthesis. Catalyzes the dehydration of short chain beta-hydroxyacyl-ACPs and long chain saturated and unsaturated beta-hydroxyacyl-ACPs. This Caldanaerobacter subterraneus subsp. tengcongensis (strain DSM 15242 / JCM 11007 / NBRC 100824 / MB4) (Thermoanaerobacter tengcongensis) protein is 3-hydroxyacyl-[acyl-carrier-protein] dehydratase FabZ.